We begin with the raw amino-acid sequence, 500 residues long: ATP synthase subunit alpha (500 aa).

Residue 169 to 176 (GDRQTGKT) participates in ATP binding.

This sequence belongs to the ATPase alpha/beta chains family. As to quaternary structure, F-type ATPases have 2 components, CF(1) - the catalytic core - and CF(0) - the membrane proton channel. CF(1) has five subunits: alpha(3), beta(3), gamma(1), delta(1), epsilon(1). CF(0) has three main subunits: a(1), b(2) and c(9-12). The alpha and beta chains form an alternating ring which encloses part of the gamma chain. CF(1) is attached to CF(0) by a central stalk formed by the gamma and epsilon chains, while a peripheral stalk is formed by the delta and b chains.

It localises to the cell inner membrane. It catalyses the reaction ATP + H2O + 4 H(+)(in) = ADP + phosphate + 5 H(+)(out). Its function is as follows. Produces ATP from ADP in the presence of a proton gradient across the membrane. The alpha chain is a regulatory subunit. This is ATP synthase subunit alpha from Fusobacterium nucleatum subsp. nucleatum (strain ATCC 25586 / DSM 15643 / BCRC 10681 / CIP 101130 / JCM 8532 / KCTC 2640 / LMG 13131 / VPI 4355).